The sequence spans 266 residues: MFKNQYDTDTTTWSPTGRLFQVEYANEAVNNGSAAVGVKGADYVVLTALKRNPVSGLSSYQEKAFKLDEHVGMAISGLVADGRALSRFLRTECMNYRYMHDSDAPLVMLADIVGAKHQRHIQFAGKRPFGVGLLIAGYDRQGPRLYQTVPSGDVFDFKATAMGLRSQAARTYLERHFRGFPACDLDELVMHALRALGAATSGGVELNIKNTTIAIVGKGTPFTILTEEEARKYLDGFKTRPEDIPAVADNEEDDDELHEQPPDVEE.

A disordered region spans residues 235 to 266 (DGFKTRPEDIPAVADNEEDDDELHEQPPDVEE). Residues 249 to 266 (DNEEDDDELHEQPPDVEE) show a composition bias toward acidic residues.

It belongs to the peptidase T1A family. The 26S proteasome consists of a 20S proteasome core and two 19S regulatory subunits. The 20S proteasome core is composed of 28 subunits that are arranged in four stacked rings, resulting in a barrel-shaped structure. The two end rings are each formed by seven alpha subunits, and the two central rings are each formed by seven beta subunits. The catalytic chamber with the active sites is on the inside of the barrel.

It localises to the cytoplasm. The protein localises to the nucleus. In terms of biological role, the proteasome is a multicatalytic proteinase complex which is characterized by its ability to cleave peptides with Arg, Phe, Tyr, Leu, and Glu adjacent to the leaving group at neutral or slightly basic pH. The proteasome has an ATP-dependent proteolytic activity. The polypeptide is Proteasome subunit alpha type-1 (Trypanosoma brucei rhodesiense).